The chain runs to 357 residues: Alanine racemase, catabolic (357 aa).

Lys-33 functions as the Proton acceptor; specific for D-alanine in the catalytic mechanism. Lys-33 is subject to N6-(pyridoxal phosphate)lysine. Arg-129 serves as a coordination point for substrate. Tyr-253 acts as the Proton acceptor; specific for L-alanine in catalysis. Met-301 is a binding site for substrate.

The protein belongs to the alanine racemase family. It depends on pyridoxal 5'-phosphate as a cofactor.

The enzyme catalyses L-alanine = D-alanine. It functions in the pathway amino-acid biosynthesis; D-alanine biosynthesis; D-alanine from L-alanine: step 1/1. Functionally, isomerizes L-alanine to D-alanine which is then likely oxidized to pyruvate by DadA. Shows racemase activity with both alanine stereoisomers, negligible activity with D-cysteine and L-serine, and exhibits no activity with the remaining natural chiral amino acids. This Pseudomonas putida (strain ATCC 47054 / DSM 6125 / CFBP 8728 / NCIMB 11950 / KT2440) protein is Alanine racemase, catabolic.